Reading from the N-terminus, the 160-residue chain is Type-1 angiotensin II receptor-associated protein (160 aa).

At 1 to 9 (MELPAVNLK) the chain is on the extracellular side. The chain crosses the membrane as a helical span at residues 10 to 30 (VILLVHWLLTTWGCLAFSGSY). The Cytoplasmic segment spans residues 31 to 53 (AWGNFTILALGVWAVAQRDSVDA). A helical membrane pass occupies residues 54 to 74 (IGMFLGGLVATIFLDIIYISI). Residues 75 to 86 (FYSSVAVGDTGR) lie on the Extracellular side of the membrane. Residues 87 to 107 (FSAGMAIFSLLLKPFSCCLVY) traverse the membrane as a helical segment. The Cytoplasmic segment spans residues 108–160 (HMHRERGGELPLRSDFFGPSQEHSAYQTIDSSDSPADPLASLENKGQAAPRGY). Positions 110–122 (HRERGGELPLRSD) are interaction with AGTR1. Residue S127 is modified to Phosphoserine. Residues 128 to 160 (QEHSAYQTIDSSDSPADPLASLENKGQAAPRGY) form a disordered region. Phosphothreonine is present on T135. Over residues 137-149 (DSSDSPADPLASL) the composition is skewed to low complexity. A Phosphoserine modification is found at S138.

As to quaternary structure, interacts with RACK1, and with the carboxy-terminal region of AGTR1.

The protein localises to the endoplasmic reticulum membrane. It is found in the golgi apparatus membrane. It localises to the cytoplasmic vesicle membrane. Its function is as follows. Appears to be a negative regulator of type-1 angiotensin II receptor-mediated signaling by regulating receptor internalization as well as mechanism of receptor desensitization such as phosphorylation. May play a role of negative regulator in cardiomyocyte hypertrophy induced by angiotensin II through an inhibition of p38 mitogen-activated protein kinase pathway. Attenuates type-1 angiotensin II receptor growth promoting effect and angiotensin II-induced phosphorylation of protein kinase AKT and of STAT3. This chain is Type-1 angiotensin II receptor-associated protein (Agtrap), found in Rattus norvegicus (Rat).